Here is a 151-residue protein sequence, read N- to C-terminus: 3-hydroxyacyl-[acyl-carrier-protein] dehydratase FabZ (151 aa).

His54 is an active-site residue.

The protein belongs to the thioester dehydratase family. FabZ subfamily.

The protein localises to the cytoplasm. The catalysed reaction is a (3R)-hydroxyacyl-[ACP] = a (2E)-enoyl-[ACP] + H2O. Functionally, involved in unsaturated fatty acids biosynthesis. Catalyzes the dehydration of short chain beta-hydroxyacyl-ACPs and long chain saturated and unsaturated beta-hydroxyacyl-ACPs. The polypeptide is 3-hydroxyacyl-[acyl-carrier-protein] dehydratase FabZ (Sodalis glossinidius (strain morsitans)).